A 321-amino-acid polypeptide reads, in one-letter code: Mas-related G-protein coupled receptor member H (321 aa).

The Extracellular segment spans residues 1–35 (MEPLATTLCPQECTQTTRNETPNETTWSSEHVTKY). N-linked (GlcNAc...) asparagine glycosylation is present at N23. A helical transmembrane segment spans residues 36–56 (TYISISLVICSLGLVGNGLLI). Over 57 to 71 (WFLIFCIKRKPFTIY) the chain is Cytoplasmic. A helical membrane pass occupies residues 72 to 92 (ILHLAFADFMVLLCSSIIQLV). The Extracellular portion of the chain corresponds to 93–102 (NTFHIYDSTL). Residues 103–126 (VSYAVLFMIFGYNTGLHLLTAISV) traverse the membrane as a helical segment. At 127–147 (ERCLSVLYPIWYHCRRPKHQS) the chain is on the cytoplasmic side. A helical transmembrane segment spans residues 148 to 168 (TVACTLLWALSVLVSGLENFF). Residues 169 to 188 (CILEVKPQFPECRYVYIFSC) lie on the Extracellular side of the membrane. Residues 189–209 (TLTFLVFVPLMVFSNLILFIQ) traverse the membrane as a helical segment. Residues 210–225 (VCCNLKPRQPAKLYVI) are Cytoplasmic-facing. The helical transmembrane segment at 226 to 246 (IMATVILFLVFAMPMKVLLII) threads the bilayer. G247 is a topological domain (extracellular). A helical transmembrane segment spans residues 248 to 271 (YYSNSTDASVWKSLPYLNMLSTIN). Residues 272 to 320 (CSINPIVYFVVGSLRRKRSRKSLKEALQKVFEEKPVVASRENEVQFSLP) are Cytoplasmic-facing.

Belongs to the G-protein coupled receptor 1 family. Mas subfamily.

The protein localises to the cell membrane. In terms of biological role, orphan receptor. May regulate nociceptor function and/or development, including the sensation or modulation of pain. The sequence is that of Mas-related G-protein coupled receptor member H (Mrgprh) from Rattus norvegicus (Rat).